The sequence spans 89 residues: Class I hydrophobin C (89 aa).

The N-terminal stretch at 1 to 16 (MKFSLATIALAAAVAA) is a signal peptide. Intrachain disulfides connect cysteine 28–cysteine 68, cysteine 39–cysteine 60, cysteine 40–cysteine 52, and cysteine 69–cysteine 85. Asparagine 36 carries N-linked (GlcNAc...) asparagine glycosylation.

It belongs to the fungal hydrophobin family.

It is found in the secreted. Its subcellular location is the cell wall. It localises to the vacuole. The protein localises to the cytoplasmic vesicle. Aerial growth, conidiation, and dispersal of filamentous fungi in the environment rely upon a capability of their secreting small amphipathic proteins called hydrophobins (HPBs) with low sequence identity. Class I can self-assemble into an outermost layer of rodlet bundles on aerial cell surfaces, conferring cellular hydrophobicity that supports fungal growth, development and dispersal; whereas Class II form highly ordered films at water-air interfaces through intermolecular interactions but contribute nothing to the rodlet structure. Hyd1C contributes to certain cell wall-related features, such as hydrophobicity but is not involved in cell wall-related events during fungal proliferation in host hemocoel. Does not contribute to conidial hydrophobicity. This is Class I hydrophobin C from Beauveria bassiana (strain ARSEF 2860) (White muscardine disease fungus).